We begin with the raw amino-acid sequence, 309 residues long: uncharacterized protein (309 aa).

Basic residues predominate over residues 1 to 16 (MAGNSRRRGAVRKAGT). A disordered region spans residues 1 to 70 (MAGNSRRRGA…AKRTEETETV (70 aa)). S-adenosyl-L-methionine is bound by residues G261, I281, and L290.

This sequence belongs to the class IV-like SAM-binding methyltransferase superfamily. RNA methyltransferase TrmH family.

This is an uncharacterized protein from Mycolicibacterium paratuberculosis (strain ATCC BAA-968 / K-10) (Mycobacterium paratuberculosis).